We begin with the raw amino-acid sequence, 136 residues long: Protein K5 (136 aa).

The protein belongs to the poxviridae K5 protein family.

This Homo sapiens (Human) protein is Protein K5.